The primary structure comprises 299 residues: Lipoyl synthase (299 aa).

[4Fe-4S] cluster is bound by residues Cys-34, Cys-39, Cys-45, Cys-60, Cys-64, Cys-67, and Ser-273. The region spanning 46–262 (WNKKHATVMI…KYVAYSKGFL (217 aa)) is the Radical SAM core domain.

The protein belongs to the radical SAM superfamily. Lipoyl synthase family. The cofactor is [4Fe-4S] cluster.

The protein resides in the cytoplasm. It carries out the reaction [[Fe-S] cluster scaffold protein carrying a second [4Fe-4S](2+) cluster] + N(6)-octanoyl-L-lysyl-[protein] + 2 oxidized [2Fe-2S]-[ferredoxin] + 2 S-adenosyl-L-methionine + 4 H(+) = [[Fe-S] cluster scaffold protein] + N(6)-[(R)-dihydrolipoyl]-L-lysyl-[protein] + 4 Fe(3+) + 2 hydrogen sulfide + 2 5'-deoxyadenosine + 2 L-methionine + 2 reduced [2Fe-2S]-[ferredoxin]. It functions in the pathway protein modification; protein lipoylation via endogenous pathway; protein N(6)-(lipoyl)lysine from octanoyl-[acyl-carrier-protein]: step 2/2. In terms of biological role, catalyzes the radical-mediated insertion of two sulfur atoms into the C-6 and C-8 positions of the octanoyl moiety bound to the lipoyl domains of lipoate-dependent enzymes, thereby converting the octanoylated domains into lipoylated derivatives. The protein is Lipoyl synthase of Ehrlichia canis (strain Jake).